The sequence spans 312 residues: Putative endonuclease 4 (312 aa).

The Zn(2+) site is built by histidine 84, histidine 127, glutamate 166, aspartate 202, histidine 205, histidine 239, aspartate 252, histidine 254, and glutamate 284.

This sequence belongs to the AP endonuclease 2 family. Zn(2+) is required as a cofactor.

It catalyses the reaction Endonucleolytic cleavage to 5'-phosphooligonucleotide end-products.. Its function is as follows. Endonuclease IV plays a role in DNA repair. It cleaves phosphodiester bonds at apurinic or apyrimidinic sites (AP sites) to produce new 5'-ends that are base-free deoxyribose 5-phosphate residues. This chain is Putative endonuclease 4, found in Acanthamoeba polyphaga (Amoeba).